Reading from the N-terminus, the 103-residue chain is Protein S100-A16 (103 aa).

In terms of domain architecture, EF-hand 1; degenerate spans 12–47 (VVVLVENFYKYVSKHSLVKNKISKSSFRKMLQKELN). The EF-hand 2 domain maps to 54 to 89 (GNRKAADKLIQNLDANHDGRISFDEYWTLIGGITSP). Ca(2+) is bound by residues D67, N69, D71, R73, and E78.

Belongs to the S-100 family. In terms of assembly, homodimer. Interacts with TP53.

The protein resides in the nucleus. It localises to the nucleolus. The protein localises to the cytoplasm. Functionally, calcium-binding protein. Binds one calcium ion per monomer. Can promote differentiation of adipocytes (in vitro). Overexpression in preadipocytes increases their proliferation, enhances adipogenesis and reduces insulin-stimulated glucose uptake. The protein is Protein S100-A16 (S100A16) of Bos taurus (Bovine).